The following is a 188-amino-acid chain: Protein GrpE (188 aa).

Basic and acidic residues predominate over residues 1–16 (MEERNEQVVEEVKEAQ). Residues 1 to 31 (MEERNEQVVEEVKEAQVEEAVTPENSEETVE) are disordered.

Belongs to the GrpE family. As to quaternary structure, homodimer.

The protein resides in the cytoplasm. Participates actively in the response to hyperosmotic and heat shock by preventing the aggregation of stress-denatured proteins, in association with DnaK and GrpE. It is the nucleotide exchange factor for DnaK and may function as a thermosensor. Unfolded proteins bind initially to DnaJ; upon interaction with the DnaJ-bound protein, DnaK hydrolyzes its bound ATP, resulting in the formation of a stable complex. GrpE releases ADP from DnaK; ATP binding to DnaK triggers the release of the substrate protein, thus completing the reaction cycle. Several rounds of ATP-dependent interactions between DnaJ, DnaK and GrpE are required for fully efficient folding. The protein is Protein GrpE of Bacillus anthracis.